The chain runs to 708 residues: RUN and FYVE domain-containing protein 1 (708 aa).

Positions 1–17 are enriched in basic and acidic residues; it reads MADREGGCAAGRGRELE. The segment at 1 to 57 is disordered; that stretch reads MADREGGCAAGRGRELEPELEPGPGPGSALEPGEEFEIVDRSQLPGPGDLRSATRPR. Positions 139 to 271 constitute an RUN domain; that stretch reads DADHAPLQQF…LDANLCLKGE (133 aa). A coiled-coil region spans residues 321-374; the sequence is TVGDLQTKIDGLEKTNSKLQEELSAATDRICSLQEEQQQLREQNELIRERSEKS. A phosphotyrosine mark is found at Y389 and Y400. A coiled-coil region spans residues 405–617; sequence KQLKEEKKVR…QALQEMGLHL (213 aa). The interval 493 to 522 is disordered; it reads QVMSSMKQMEERLQHSERARQGAEERSHKL. The segment covering 500–522 has biased composition (basic and acidic residues); that stretch reads QMEERLQHSERARQGAEERSHKL. Residues 615–625 form an interaction with RAB4 region; the sequence is LHLSQSKLKME. S620 is modified (phosphoserine). An FYVE-type zinc finger spans residues 642–700; the sequence is DDEATHCRQCEKEFSISRRKHHCRNCGHIFCNTCSSNELALPSYPKPVRVCDSCHTLLL. The Zn(2+) site is built by C648, C651, C664, C667, C672, C675, C692, and C695.

As to quaternary structure, self-assembles through coiled coil domains to drive ELVA (endo-lysosomal vesicular assembly) formation. Interacts with BMX. May interact with SSB. Interacts with RAB4 and RAB5 that have been activated by GTP-binding. Interacts WITH RAB14 and RAB4B (GTP-bound form); the interactions allow endosomal tethering and fusion. Interacts with ARL8B (GTP-bound form); the interaction is required for RUFY1 endosomal location and promotes interaction with RAB14. Post-translationally, phosphorylation on Tyr-389 and/or Tyr-400 is required for interaction with BMX and endosomal targeting. Broadly expressed, with highest levels in lung, testis, kidney and brain.

The protein localises to the early endosome membrane. Activating adapter involved in cargo sorting from early/recycling endosomes. Regulates retrieval of proteins from endosomes to the trans-Golgi network through interaction with the dynein-dynactin complex. Dual effector of RAB4B and RAB14, mediates a cooperative interaction allowing endosomal tethering and fusion. Binds phospholipid vesicles containing phosphatidylinositol 3-phosphate and participates in early endosomal trafficking. In oocytes, self-assembles to form a protein matrix which hold together endolysosomes, autophagosomes and proteasomes and generate non-membrane-bound compartments called endo-lysosomal vesicular assemblies (ELVAs). In immature oocytes, ELVAs sequester ubiquitinated protein aggregates and degrade them upon oocyte maturation. This Homo sapiens (Human) protein is RUN and FYVE domain-containing protein 1.